We begin with the raw amino-acid sequence, 292 residues long: MNNHFKCIGIVGHPRHPTALTTHEMLYRWLCAKGYEVIVEQQIAHELQLKNVKTGTLAEIGQLADLAVVVGGDGNMLGAARTLARYDIKVIGINRGNLGFLTDLDPDNAQQQLADVLEGHYIIEKRFLLEAQVCQQDCQKRISTAINEVVLHPGKVAHMIEFEVYIDEIFAFSQRSDGLIISTPTGSTAYSLSAGGPILTPSLDAITLVPMFPHTLSARPLVINSSSTIRLRFSHRRNDLEISCDSQIALPIQEGEDVLIRRCDYHLNLIHPKDYSYFNTLSTKLGWSKKLF.

The active-site Proton acceptor is D73. Residues 73–74, 147–148, H158, R175, D177, 188–193, and Q247 contribute to the NAD(+) site; these read DG, NE, and TAYSLS.

Belongs to the NAD kinase family. It depends on a divalent metal cation as a cofactor.

It is found in the cytoplasm. The catalysed reaction is NAD(+) + ATP = ADP + NADP(+) + H(+). Its function is as follows. Involved in the regulation of the intracellular balance of NAD and NADP, and is a key enzyme in the biosynthesis of NADP. Catalyzes specifically the phosphorylation on 2'-hydroxyl of the adenosine moiety of NAD to yield NADP. The chain is NAD kinase from Escherichia coli O7:K1 (strain IAI39 / ExPEC).